We begin with the raw amino-acid sequence, 222 residues long: Large ribosomal subunit protein uL11c (222 aa).

The segment at 1 to 20 (MASSSLSTLCSSTSSSLHPN) is disordered. A chloroplast-targeting transit peptide spans 1–62 (MASSSLSTLC…TPRFLTVIAM (62 aa)).

This sequence belongs to the universal ribosomal protein uL11 family. Part of the ribosomal stalk of the 50S ribosomal subunit. Interacts with L10 and the large rRNA to form the base of the stalk. L10 forms an elongated spine to which L12 dimers bind in a sequential fashion forming a multimeric L10(L12)X complex.

Its subcellular location is the plastid. The protein resides in the chloroplast. Its function is as follows. Forms part of the ribosomal stalk which helps the ribosome interact with GTP-bound translation factors. The sequence is that of Large ribosomal subunit protein uL11c (RPL11) from Arabidopsis thaliana (Mouse-ear cress).